Reading from the N-terminus, the 639-residue chain is Chaperone protein DnaK (639 aa).

Phosphothreonine; by autocatalysis is present on Thr198. Low complexity predominate over residues 603-618 (AKAQTQGGAQEGAAKQ). A disordered region spans residues 603 to 639 (AKAQTQGGAQEGAAKQSNATADDVVDAEFEEVKDDKK). Residues 625 to 639 (DVVDAEFEEVKDDKK) show a composition bias toward acidic residues.

Belongs to the heat shock protein 70 family.

Functionally, acts as a chaperone. The polypeptide is Chaperone protein DnaK (Shewanella oneidensis (strain ATCC 700550 / JCM 31522 / CIP 106686 / LMG 19005 / NCIMB 14063 / MR-1)).